The following is a 417-amino-acid chain: 4-hydroxy-3-methylbut-2-en-1-yl diphosphate synthase (flavodoxin) (417 aa).

[4Fe-4S] cluster contacts are provided by C307, C310, C353, and E360.

This sequence belongs to the IspG family. The cofactor is [4Fe-4S] cluster.

The enzyme catalyses (2E)-4-hydroxy-3-methylbut-2-enyl diphosphate + oxidized [flavodoxin] + H2O + 2 H(+) = 2-C-methyl-D-erythritol 2,4-cyclic diphosphate + reduced [flavodoxin]. The protein operates within isoprenoid biosynthesis; isopentenyl diphosphate biosynthesis via DXP pathway; isopentenyl diphosphate from 1-deoxy-D-xylulose 5-phosphate: step 5/6. Functionally, converts 2C-methyl-D-erythritol 2,4-cyclodiphosphate (ME-2,4cPP) into 1-hydroxy-2-methyl-2-(E)-butenyl 4-diphosphate. The sequence is that of 4-hydroxy-3-methylbut-2-en-1-yl diphosphate synthase (flavodoxin) from Xylella fastidiosa (strain 9a5c).